Consider the following 644-residue polypeptide: Mitochondrial 15S rRNA processing factor CCM1 (644 aa).

The N-terminal 38 residues, M1–N38, are a transit peptide targeting the mitochondrion. The tract at residues I78 to N108 is disordered. Positions S89 to N108 are enriched in polar residues. 3 PPR repeats span residues P245–P279, S280–T315, and A318–V352.

It belongs to the CCM1 family. As to quaternary structure, binds to mitochondrial small subunit 15S rRNA.

Its subcellular location is the mitochondrion. In terms of biological role, regulates mitochondrial small subunit maturation by controlling 15S rRNA 5'-end processing. Localizes to the 5' precursor of the 15S rRNA in a position that is subsequently occupied by mS47 in the mature yeast mtSSU. Uses structure and sequence-specific RNA recognition, binding to a single-stranded region of the precursor and specifically recognizing bases -6 to -1. The exchange of Ccm1 for mS47 is coupled to the irreversible removal of precursor rRNA that is accompanied by conformational changes of the mitoribosomal proteins uS5m and mS26. These conformational changes signal completion of 5'-end rRNA processing through protection of the mature 5'-end of the 15S rRNA and stabilization of mS47. The removal of the 5' precursor together with the dissociation of Ccm1 may be catalyzed by the 5'-3' exoribonuclease Pet127. Involved in the specific removal of group I introns in mitochondrial encoded transcripts. The chain is Mitochondrial 15S rRNA processing factor CCM1 (CCM1) from Meyerozyma guilliermondii (strain ATCC 6260 / CBS 566 / DSM 6381 / JCM 1539 / NBRC 10279 / NRRL Y-324) (Yeast).